The primary structure comprises 838 residues: Polyribonucleotide nucleotidyltransferase (838 aa).

Residues Asp494 and Asp500 each contribute to the Mg(2+) site. Residues 561 to 620 (PRMESMLIDKGKIKNVIGAGGKNVREICEKTGAKIEISQDGTVMIYAVGREAIESAKDMI) enclose the KH domain. The region spanning 630–697 (GKIYSGEVCE…DKDHIQLSMR (68 aa)) is the S1 motif domain. Over residues 747–757 (GGASAGRNGRG) the composition is skewed to gly residues. The tract at residues 747–838 (GGASAGRNGR…PAAPKKPRFF (92 aa)) is disordered. A compositionally biased stretch (low complexity) spans 788-810 (AGSSGYSSDSSSGNTKSSSSESS). Over residues 811–820 (GGTGGRGRNG) the composition is skewed to gly residues.

This sequence belongs to the polyribonucleotide nucleotidyltransferase family. Requires Mg(2+) as cofactor.

The protein resides in the cytoplasm. It carries out the reaction RNA(n+1) + phosphate = RNA(n) + a ribonucleoside 5'-diphosphate. Its function is as follows. Involved in mRNA degradation. Catalyzes the phosphorolysis of single-stranded polyribonucleotides processively in the 3'- to 5'-direction. The sequence is that of Polyribonucleotide nucleotidyltransferase from Anaplasma phagocytophilum (strain HZ).